Reading from the N-terminus, the 179-residue chain is Large ribosomal subunit protein uL5 (179 aa).

Belongs to the universal ribosomal protein uL5 family. Part of the 50S ribosomal subunit; part of the 5S rRNA/L5/L18/L25 subcomplex. Contacts the 5S rRNA and the P site tRNA. Forms a bridge to the 30S subunit in the 70S ribosome.

Its function is as follows. This is one of the proteins that bind and probably mediate the attachment of the 5S RNA into the large ribosomal subunit, where it forms part of the central protuberance. In the 70S ribosome it contacts protein S13 of the 30S subunit (bridge B1b), connecting the 2 subunits; this bridge is implicated in subunit movement. Contacts the P site tRNA; the 5S rRNA and some of its associated proteins might help stabilize positioning of ribosome-bound tRNAs. The protein is Large ribosomal subunit protein uL5 of Herpetosiphon aurantiacus (strain ATCC 23779 / DSM 785 / 114-95).